Reading from the N-terminus, the 173-residue chain is CKLF-like MARVEL transmembrane domain-containing protein 8 (173 aa).

The 133-residue stretch at 36–168 (FLRTLPGLLI…NTYFSFIAWR (133 aa)) folds into the MARVEL domain. The next 4 membrane-spanning stretches (helical) occupy residues 40 to 60 (LPGL…TLIA), 70 to 90 (FGWV…FLII), 105 to 125 (TTVG…AAIV), and 147 to 167 (FFAF…FIAW).

Belongs to the chemokine-like factor family.

It is found in the membrane. This is CKLF-like MARVEL transmembrane domain-containing protein 8 (CMTM8) from Bos taurus (Bovine).